The sequence spans 157 residues: Endosomal/vacuolar adapter protein YPT35 (157 aa).

The PX domain occupies 43-157; the sequence is ITDVLVGDYH…SPVITHFILN (115 aa).

It belongs to the YPT35 family.

The protein localises to the endosome membrane. It is found in the vacuole membrane. Recruits the lipid transfer protein VPS13 to endosomal and vacuolar membranes. This chain is Endosomal/vacuolar adapter protein YPT35 (YPT35), found in Debaryomyces hansenii (strain ATCC 36239 / CBS 767 / BCRC 21394 / JCM 1990 / NBRC 0083 / IGC 2968) (Yeast).